Consider the following 298-residue polypeptide: MIIKRREYMRIADYSVTKAVLDRHGFTFKKSFGQNFLTDTNILQKIVDTAEIDQNVNVIEIGPGIGALTEFLAENAAEVMAFEIDDRLVPILADTLRDFDNVQVVNQDILKADLQTQIKQFKNPDLPIKVVANLPYYITTPILMHLIESKIPFQEFVVMMQREVADRISAEPNTKAYGSLSIAVQYYMTAKVAFIVPRTVFVPAPNVDSAILKMVRRDQPLIEVEDEDFFFRVSRLSFVHRRKTLWNNLTSHFGKSEDIKAKLEKGLALADIKPSIRGEALSIQDFGKLADALKEVGL.

Residues Asn-35, Leu-37, Gly-62, Glu-83, Asp-108, and Asn-133 each contribute to the S-adenosyl-L-methionine site.

This sequence belongs to the class I-like SAM-binding methyltransferase superfamily. rRNA adenine N(6)-methyltransferase family. RsmA subfamily.

Its subcellular location is the cytoplasm. The catalysed reaction is adenosine(1518)/adenosine(1519) in 16S rRNA + 4 S-adenosyl-L-methionine = N(6)-dimethyladenosine(1518)/N(6)-dimethyladenosine(1519) in 16S rRNA + 4 S-adenosyl-L-homocysteine + 4 H(+). Functionally, specifically dimethylates two adjacent adenosines (A1518 and A1519) in the loop of a conserved hairpin near the 3'-end of 16S rRNA in the 30S particle. May play a critical role in biogenesis of 30S subunits. The protein is Ribosomal RNA small subunit methyltransferase A of Streptococcus pyogenes serotype M4 (strain MGAS10750).